The primary structure comprises 73 residues: UPF0435 protein lwe1727 (73 aa).

It belongs to the UPF0435 family.

The protein is UPF0435 protein lwe1727 of Listeria welshimeri serovar 6b (strain ATCC 35897 / DSM 20650 / CCUG 15529 / CIP 8149 / NCTC 11857 / SLCC 5334 / V8).